The following is a 179-amino-acid chain: Large ribosomal subunit protein uL5 (179 aa).

It belongs to the universal ribosomal protein uL5 family. In terms of assembly, part of the 50S ribosomal subunit; part of the 5S rRNA/L5/L18/L25 subcomplex. Contacts the 5S rRNA and the P site tRNA. Forms a bridge to the 30S subunit in the 70S ribosome.

In terms of biological role, this is one of the proteins that bind and probably mediate the attachment of the 5S RNA into the large ribosomal subunit, where it forms part of the central protuberance. In the 70S ribosome it contacts protein S13 of the 30S subunit (bridge B1b), connecting the 2 subunits; this bridge is implicated in subunit movement. Contacts the P site tRNA; the 5S rRNA and some of its associated proteins might help stabilize positioning of ribosome-bound tRNAs. This Aromatoleum aromaticum (strain DSM 19018 / LMG 30748 / EbN1) (Azoarcus sp. (strain EbN1)) protein is Large ribosomal subunit protein uL5.